The sequence spans 396 residues: Elongation factor Tu 2 (396 aa).

Positions 10-206 (KPHCNIGTIG…TVDAYIPQPD (197 aa)) constitute a tr-type G domain. The G1 stretch occupies residues 19 to 26 (GHVDHGKT). 19 to 26 (GHVDHGKT) contacts GTP. Threonine 26 serves as a coordination point for Mg(2+). Positions 60-64 (GITIN) are G2. The tract at residues 81–84 (DCPG) is G3. Residues 81-85 (DCPGH) and 136-139 (NKVD) each bind GTP. A G4 region spans residues 136 to 139 (NKVD). Residues 174-176 (SAK) are G5.

This sequence belongs to the TRAFAC class translation factor GTPase superfamily. Classic translation factor GTPase family. EF-Tu/EF-1A subfamily. In terms of assembly, monomer.

Its subcellular location is the cytoplasm. The catalysed reaction is GTP + H2O = GDP + phosphate + H(+). Its function is as follows. GTP hydrolase that promotes the GTP-dependent binding of aminoacyl-tRNA to the A-site of ribosomes during protein biosynthesis. This Caulobacter sp. (strain K31) protein is Elongation factor Tu 2.